The chain runs to 654 residues: Import motor subunit, mitochondrial (654 aa).

A mitochondrion-targeting transit peptide spans 1–23 (MLAAKNILNRSSLSSSFRIATRL). Residue Thr330 is modified to Phosphothreonine. A disordered region spans residues 629-654 (EQLYKNDSNNNNNNNGNNAESGETKQ). Low complexity predominate over residues 637-646 (NNNNNNNGNN).

The protein belongs to the heat shock protein 70 family. Component of the PAM complex, at least composed of SSC1 (mtHsp70), MGE1, TIM44, PAM16/TIM16, PAM17 and PAM18/TIM14. In the complex, SSC1 interacts directly with PAM18 and TIM44. Interacts with NAP1.

It is found in the mitochondrion matrix. It catalyses the reaction ATP + H2O = ADP + phosphate + H(+). Essential component of the PAM complex, a complex required for the translocation of transit peptide-containing proteins from the inner membrane into the mitochondrial matrix in an ATP-dependent manner. Constitutes the ATP-driven core of the motor and binds the precursor preprotein. Required for the import of the processed frataxin homolog YFH1 into the mitochondrion. This chain is Import motor subunit, mitochondrial, found in Saccharomyces cerevisiae (strain ATCC 204508 / S288c) (Baker's yeast).